A 360-amino-acid polypeptide reads, in one-letter code: MNAPLGGIWLWLPLLLTWLTPEVSSSWWYMRATGGSSRVMCDNVPGLVSRQRQLCHRHPDVMRAISLGVSEWTAECQHQFRQHRWNCNTLDRDHSLFGRVLLRSSRESAFVYAISSAGVVFAITRACSQGELKSCSCDPKKKGTAKDSKGTFDWGGCSDNIDYGIKFARAFVDAKERKGKDARALMNLHNNRAGRKAVKRFLKQECKCHGVSGSCTLRTCWLAMADFRKTGAYLWRKYNGAIQVVMNQDGTGFTVANKRFKKPTKNDLVYFENSPDYCIRDREAGSLGTAGRVCNLTSRGMDSCEVMCCGRGYDTSRVTRMTKCECKFHWCCAVRCQDCLEALDVHTCKAPKNADWATPT.

An N-terminal signal peptide occupies residues 1–26; it reads MNAPLGGIWLWLPLLLTWLTPEVSSS. 11 disulfides stabilise this stretch: cysteine 76-cysteine 87, cysteine 127-cysteine 135, cysteine 137-cysteine 157, cysteine 206-cysteine 220, cysteine 208-cysteine 215, cysteine 278-cysteine 309, cysteine 294-cysteine 304, cysteine 308-cysteine 348, cysteine 324-cysteine 339, cysteine 326-cysteine 336, and cysteine 331-cysteine 332. A lipid anchor (O-palmitoleoyl serine; by PORCN) is attached at serine 212. Asparagine 295 is a glycosylation site (N-linked (GlcNAc...) asparagine).

This sequence belongs to the Wnt family. In terms of processing, palmitoleoylation is required for efficient binding to frizzled receptors. Depalmitoleoylation leads to Wnt signaling pathway inhibition.

Its subcellular location is the secreted. The protein resides in the extracellular space. The protein localises to the extracellular matrix. Ligand for members of the frizzled family of seven transmembrane receptors. Probable developmental protein. May be a signaling molecule which affects the development of discrete regions of tissues. Is likely to signal over only few cell diameters. The sequence is that of Protein Wnt-2 (WNT2) from Eulemur macaco macaco (Black lemur).